A 401-amino-acid polypeptide reads, in one-letter code: Probable 2,3-bisphosphoglycerate-independent phosphoglycerate mutase (401 aa).

This sequence belongs to the BPG-independent phosphoglycerate mutase family. A-PGAM subfamily.

The enzyme catalyses (2R)-2-phosphoglycerate = (2R)-3-phosphoglycerate. Its pathway is carbohydrate degradation; glycolysis; pyruvate from D-glyceraldehyde 3-phosphate: step 3/5. Its function is as follows. Catalyzes the interconversion of 2-phosphoglycerate and 3-phosphoglycerate. The protein is Probable 2,3-bisphosphoglycerate-independent phosphoglycerate mutase of Thermotoga sp. (strain RQ2).